The primary structure comprises 251 residues: uncharacterized protein (251 aa).

The N-terminal stretch at 1 to 25 (MSAGRLNKKSLGIVMLLSVGLLLAG) is a signal peptide. The N-palmitoyl cysteine moiety is linked to residue Cys-26. The S-diacylglycerol cysteine moiety is linked to residue Cys-26. The LysM domain maps to 40–84 (SVYTVKRGDTLYRISRTTGTSVKELARLNGISPPYTIEVGQKLKL). Residues 93–112 (TRKSTAKSTTKTASVTPSSA) show a composition bias toward low complexity. The disordered stretch occupies residues 93–115 (TRKSTAKSTTKTASVTPSSAVPK).

Belongs to the peptidase M23B family.

The protein localises to the cell inner membrane. This is an uncharacterized protein from Escherichia coli (strain K12).